Here is a 523-residue protein sequence, read N- to C-terminus: Keratin, type II cytoskeletal 71 (523 aa).

The segment at 1–129 is head; the sequence is MSRQFTCKSG…DPEIQKVRAQ (129 aa). A coil 1A region spans residues 130–165; that stretch reads EREQIKALNNKFASFIDKVRFLEQQNQVLETKWELL. Residues 130–443 enclose the IF rod domain; the sequence is EREQIKALNN…KLLESEECRM (314 aa). The linker 1 stretch occupies residues 166-184; sequence QQLDLNNCKNNLEPILEGY. Residues 185–276 are coil 1B; the sequence is ISNLRKQLET…CLFEAEITQI (92 aa). Residues 277–300 are linker 12; sequence QSHISDMSVILSMDNNRNLDLDSI. The segment at 301–439 is coil 2; it reads IDEVRTQYEE…ATYRKLLESE (139 aa). The segment at 440-523 is tail; that stretch reads ECRMSGEFPS…LSAPSKKTSR (84 aa). A disordered region spans residues 492–523; it reads GGEGRSRGSANDYKDTLGKGSSLSAPSKKTSR. The segment covering 493–508 has biased composition (basic and acidic residues); the sequence is GEGRSRGSANDYKDTL. Residues 510–523 show a composition bias toward polar residues; that stretch reads KGSSLSAPSKKTSR.

This sequence belongs to the intermediate filament family. As to quaternary structure, heterodimer of a type I and a type II keratin. Associates with KRT16 and/or KRT17. In terms of tissue distribution, highly expressed in hair follicles from scalp. Specifically expressed in the inner root sheath (IRS) of the hair follicle. Present in the all 3 IRS layers: the cuticle, the Henle and the Huxley layers. Also detected in the pseudopods of specialized Huxley cells, termed Fluegelzellen, along the area of differentiated Henle cells (at protein level).

The protein resides in the cytoplasm. Its subcellular location is the cytoskeleton. In terms of biological role, plays a central role in hair formation. Essential component of keratin intermediate filaments in the inner root sheath (IRS) of the hair follicle. In Homo sapiens (Human), this protein is Keratin, type II cytoskeletal 71 (KRT71).